Reading from the N-terminus, the 463-residue chain is Phosphoglycerate transporter protein (463 aa).

Topologically, residues 1–29 are cytoplasmic; that stretch reads MLTILKTGQSAHKVPPEKVQATYGRYRIQ. Helical transmembrane passes span 30–50, 59–79, 106–126, 127–147, 160–180, 188–208, 267–287, 297–317, 326–346, 349–369, 391–411, and 413–433; these read ALLS…NFTL, LDLS…AYGI, IVNV…LVVF, NGLF…NWFP, ISHN…FAIL, ASYI…LVLG, VFVY…LLTV, VAFL…GWLS, MPLA…YWKS, LLMV…PQFL, GFMS…VMVD, and LGWY…ILFC.

It belongs to the major facilitator superfamily. Organophosphate:Pi antiporter (OPA) (TC 2.A.1.4) family.

The protein resides in the cell inner membrane. The phosphoglycerate transporter protein is a part of the PGT transport system. It is the membrane bound transporter for phosphoglycerate into salmonella. This Salmonella typhimurium (strain LT2 / SGSC1412 / ATCC 700720) protein is Phosphoglycerate transporter protein (pgtP).